The sequence spans 75 residues: DNA-directed RNA polymerase subunit omega (75 aa).

It belongs to the RNA polymerase subunit omega family. In terms of assembly, in cyanobacteria the RNAP catalytic core is composed of 2 alpha, 1 beta, 1 beta', 1 gamma and 1 omega subunit. When a sigma factor is associated with the core the holoenzyme is formed, which can initiate transcription.

It catalyses the reaction RNA(n) + a ribonucleoside 5'-triphosphate = RNA(n+1) + diphosphate. Functionally, promotes RNA polymerase assembly. Latches the N- and C-terminal regions of the beta' subunit thereby facilitating its interaction with the beta and alpha subunits. This is DNA-directed RNA polymerase subunit omega from Synechococcus sp. (strain WH7803).